Consider the following 346-residue polypeptide: Dehydrogenase azaJ (346 aa).

43–48 (VDYATQ) provides a ligand contact to NADP(+). A substrate-binding site is contributed by 133–140 (LAFSTAIV). NADP(+) is bound by residues 170-173 (ATSV), 193-196 (SPHN), tyrosine 211, and 251-252 (LN). Residue 269-273 (APPNV) coordinates substrate. Residue 336–337 (VS) participates in NADP(+) binding.

Belongs to the zinc-containing alcohol dehydrogenase family.

It functions in the pathway secondary metabolite biosynthesis. Its function is as follows. Dehydrogenase; part of the gene cluster that mediates the biosynthesis of azaphilones, a class of fungal metabolites characterized by a highly oxygenated pyrano-quinone bicyclic core and exhibiting a broad range of bioactivities. In the first step, the non-reducing polyketide synthase azaA forms the hexaketide precursor from successive condensations of five malonyl-CoA units, presumably with a simple acetyl-CoA starter unit. The reactive polyketide chain then undergoes a PT-mediated C2-C7 cyclization to afford the aromatic ring and is eventually released as an aldehyde through the R-domain. The putative ketoreductase azaE is proposed to catalyze the reduction of the terminal ketone resulting in the early culture product FK17-P2a. The monooxygenase azaH was demonstrated to be the only enzyme required to convert FK17-P2a to azanigerone E. AzaH first hydroxylates the benzaldehyde intermediate FK17-P2a at C4, which triggers the formation of the pyran-ring to afford azanigerone E. In parallel, the 2,4-dimethylhexanoyl chain is synthesized by the HR-PKS azaB and is proposed to be transferred to the C4-hydroxyl of azanigerone E by the acyltransferase azaD directly from the ACP domain of azaB. Alternatively, the 2,4-dimethyl-hexanoyl chain may be offloaded from the HR-PKS as a carboxylic acid and converted to an acyl-CoA by azaF. The resulting acyl-CoA molecule could then be taken up as a substrate by AzaD to form azanigerone B. To yield the carboxylic acid substituent in azanigerone A, the hydroxypropyl side chain of azanigerone B would need to undergo a C-C oxidative cleavage catalyzed by cytochrome P450 AzaI. AzaI is proposed to act on a vicinal diol that leads to a C-C bond scission either through an alkoxyradical intermediate or a peroxy complex. In the biosynthesis of azanigerone A, azanigerone B first undergoes hydroxylation at C10, possibly catalyzed by one of the two FAD-dependent monooxygenases encoded in the cluster, azaG or azaL, resulting in the vicinal diol azanigerone C. Oxidative cleavage of azanigerone C by azaI would yield the corresponding aldehyde derivative of azanigerone A. Finally, the dehydrogenase azaJ is proposed to convert the aldehyde functional group into the carboxylic acid, completing the conversion from azanigerone B to azanigerone A. Alternatively, the oxidation of aldehyde to carboxylic acid may be catalyzed by the same P450 enzyme azaI via consecutive oxidation or by endogenous alcohol dehydrogenase. This Aspergillus niger (strain ATCC 1015 / CBS 113.46 / FGSC A1144 / LSHB Ac4 / NCTC 3858a / NRRL 328 / USDA 3528.7) protein is Dehydrogenase azaJ.